A 409-amino-acid polypeptide reads, in one-letter code: Imidazolonepropionase (409 aa).

Fe(3+) is bound by residues histidine 70 and histidine 72. Zn(2+)-binding residues include histidine 70 and histidine 72. The 4-imidazolone-5-propanoate site is built by arginine 79, tyrosine 137, and histidine 164. Tyrosine 137 is an N-formimidoyl-L-glutamate binding site. Histidine 225 provides a ligand contact to Fe(3+). Histidine 225 contacts Zn(2+). Position 228 (glutamine 228) interacts with 4-imidazolone-5-propanoate. The N-formimidoyl-L-glutamate site is built by asparagine 314 and glycine 316. A 4-imidazolone-5-propanoate-binding site is contributed by threonine 317.

The protein belongs to the metallo-dependent hydrolases superfamily. HutI family. The cofactor is Zn(2+). It depends on Fe(3+) as a cofactor.

The protein resides in the cytoplasm. The catalysed reaction is 4-imidazolone-5-propanoate + H2O = N-formimidoyl-L-glutamate. The protein operates within amino-acid degradation; L-histidine degradation into L-glutamate; N-formimidoyl-L-glutamate from L-histidine: step 3/3. Its function is as follows. Catalyzes the hydrolytic cleavage of the carbon-nitrogen bond in imidazolone-5-propanoate to yield N-formimidoyl-L-glutamate. It is the third step in the universal histidine degradation pathway. The protein is Imidazolonepropionase of Paenarthrobacter aurescens (strain TC1).